Consider the following 72-residue polypeptide: Translation initiation factor IF-1 (72 aa).

Positions 1-72 (MAKEDSIEMQ…TKGRIVFRAR (72 aa)) constitute an S1-like domain.

Belongs to the IF-1 family. Component of the 30S ribosomal translation pre-initiation complex which assembles on the 30S ribosome in the order IF-2 and IF-3, IF-1 and N-formylmethionyl-tRNA(fMet); mRNA recruitment can occur at any time during PIC assembly.

Its subcellular location is the cytoplasm. In terms of biological role, one of the essential components for the initiation of protein synthesis. Stabilizes the binding of IF-2 and IF-3 on the 30S subunit to which N-formylmethionyl-tRNA(fMet) subsequently binds. Helps modulate mRNA selection, yielding the 30S pre-initiation complex (PIC). Upon addition of the 50S ribosomal subunit IF-1, IF-2 and IF-3 are released leaving the mature 70S translation initiation complex. This chain is Translation initiation factor IF-1, found in Idiomarina loihiensis (strain ATCC BAA-735 / DSM 15497 / L2-TR).